Here is a 1032-residue protein sequence, read N- to C-terminus: tRNA wybutosine-synthesizing protein 4 (1032 aa).

S-adenosyl-L-methionine contacts are provided by residues Arg-69, Gly-95, Asp-122, 169–170, and Glu-196; that span reads DL. The interval 702–726 is disordered; that stretch reads ESVEPNKSQSEKATSKPSAQSQNEP. Over residues 716-725 the composition is skewed to polar residues; the sequence is SKPSAQSQNE. Positions 833-988 constitute a JmjC domain; that stretch reads PTKLPANLAV…AAGRDVYGNR (156 aa).

Belongs to the methyltransferase superfamily. LCMT family.

It carries out the reaction 7-[(3S)-3-amino-3-carboxypropyl]wyosine(37) in tRNA(Phe) + S-adenosyl-L-methionine = 7-[(3S)-(3-amino-3-methoxycarbonyl)propyl]wyosine(37) in tRNA(Phe) + S-adenosyl-L-homocysteine. The catalysed reaction is 7-[(3S)-(3-amino-3-methoxycarbonyl)propyl]wyosine(37) in tRNA(Phe) + S-adenosyl-L-methionine + CO2 = wybutosine(37) in tRNA(Phe) + S-adenosyl-L-homocysteine + 2 H(+). It functions in the pathway tRNA modification; wybutosine-tRNA(Phe) biosynthesis. Its function is as follows. Probable S-adenosyl-L-methionine-dependent methyltransferase that acts as a component of the wybutosine biosynthesis pathway. Wybutosine is a hyper modified guanosine with a tricyclic base found at the 3'-position adjacent to the anticodon of eukaryotic phenylalanine tRNA. May methylate the carboxyl group of leucine residues to form alpha-leucine ester residues. The chain is tRNA wybutosine-synthesizing protein 4 (ppm2) from Aspergillus oryzae (strain ATCC 42149 / RIB 40) (Yellow koji mold).